The sequence spans 389 residues: Chorismate synthase (389 aa).

NADP(+) contacts are provided by R39 and R45. Residues 130 to 132 (RSS), 251 to 252 (NA), G296, 311 to 315 (KPIPT), and R338 contribute to the FMN site.

This sequence belongs to the chorismate synthase family. Homotetramer. FMNH2 is required as a cofactor.

The enzyme catalyses 5-O-(1-carboxyvinyl)-3-phosphoshikimate = chorismate + phosphate. Its pathway is metabolic intermediate biosynthesis; chorismate biosynthesis; chorismate from D-erythrose 4-phosphate and phosphoenolpyruvate: step 7/7. Catalyzes the anti-1,4-elimination of the C-3 phosphate and the C-6 proR hydrogen from 5-enolpyruvylshikimate-3-phosphate (EPSP) to yield chorismate, which is the branch point compound that serves as the starting substrate for the three terminal pathways of aromatic amino acid biosynthesis. This reaction introduces a second double bond into the aromatic ring system. The chain is Chorismate synthase from Oceanobacillus iheyensis (strain DSM 14371 / CIP 107618 / JCM 11309 / KCTC 3954 / HTE831).